A 366-amino-acid chain; its full sequence is Chorismate synthase (366 aa).

NADP(+) contacts are provided by Arg48 and Arg54. Residues 125-127 (RSS), 238-239 (NA), Gly278, 293-297 (KPTSS), and Arg319 each bind FMN.

It belongs to the chorismate synthase family. In terms of assembly, homotetramer. FMNH2 is required as a cofactor.

The catalysed reaction is 5-O-(1-carboxyvinyl)-3-phosphoshikimate = chorismate + phosphate. It functions in the pathway metabolic intermediate biosynthesis; chorismate biosynthesis; chorismate from D-erythrose 4-phosphate and phosphoenolpyruvate: step 7/7. Catalyzes the anti-1,4-elimination of the C-3 phosphate and the C-6 proR hydrogen from 5-enolpyruvylshikimate-3-phosphate (EPSP) to yield chorismate, which is the branch point compound that serves as the starting substrate for the three terminal pathways of aromatic amino acid biosynthesis. This reaction introduces a second double bond into the aromatic ring system. This chain is Chorismate synthase, found in Dechloromonas aromatica (strain RCB).